Consider the following 345-residue polypeptide: AA9 family lytic polysaccharide monooxygenase D (345 aa).

The signal sequence occupies residues 1-21 (MPSFTSKTLLAALAGAAAVNA). Positions 22 and 107 each coordinate Cu(2+). The cysteines at positions 77 and 200 are disulfide-linked. The N-linked (GlcNAc...) asparagine glycan is linked to Asn-160. Residues His-186 and Gln-195 each contribute to the O2 site. Residue Tyr-197 participates in Cu(2+) binding. Residues 315-345 (VQTSTRPISTRPQPTRCPGLGRRHLRKVARA) form a disordered region. Polar residues predominate over residues 318 to 327 (STRPISTRPQ). The segment covering 335–345 (GRRHLRKVARA) has biased composition (basic residues).

The protein belongs to the polysaccharide monooxygenase AA9 family. Cu(2+) is required as a cofactor.

Its subcellular location is the secreted. The enzyme catalyses [(1-&gt;4)-beta-D-glucosyl]n+m + reduced acceptor + O2 = 4-dehydro-beta-D-glucosyl-[(1-&gt;4)-beta-D-glucosyl]n-1 + [(1-&gt;4)-beta-D-glucosyl]m + acceptor + H2O.. Functionally, lytic polysaccharide monooxygenase (LPMO) that depolymerizes crystalline and amorphous polysaccharides via the oxidation of scissile alpha- or beta-(1-4)-glycosidic bonds, yielding C1 or C4 oxidation products. Catalysis by LPMOs requires the reduction of the active-site copper from Cu(II) to Cu(I) by a reducing agent and H(2)O(2) or O(2) as a cosubstrate. In Podospora anserina (strain S / ATCC MYA-4624 / DSM 980 / FGSC 10383) (Pleurage anserina), this protein is AA9 family lytic polysaccharide monooxygenase D.